A 284-amino-acid chain; its full sequence is Rubber cis-polyprenyltransferase HRT2 (284 aa).

D41 is an active-site residue.

This sequence belongs to the UPP synthase family. Predominantly expressed in latex.

The enzyme catalyses (cis-prenyl)(n)-diphosphate + isopentenyl diphosphate = (cis-prenyl)(n+1)-diphosphate + diphosphate. In terms of biological role, proposed to be involved in rubber biosynthesis as a particle-bound rubber transferase responsible for the cis-1,4-polymerization of isoprene subunits. Probably requires additional factors for the production of high molecular mass rubber. The chain is Rubber cis-polyprenyltransferase HRT2 (HRT2) from Hevea brasiliensis (Para rubber tree).